Reading from the N-terminus, the 180-residue chain is UPF0340 protein LL0489 (180 aa).

This sequence belongs to the UPF0340 family.

In Lactococcus lactis subsp. lactis (strain IL1403) (Streptococcus lactis), this protein is UPF0340 protein LL0489 (yeiF).